The chain runs to 378 residues: Integrator complex assembly factor WDR73 (378 aa).

WD repeat units lie at residues 73–113, 121–163, 167–205, 214–255, 266–305, and 322–371; these read DFKV…VWQV, KAVS…VVDL, KTTYTSDVSDSEELSSLQVLDADTFAFCCASGRLGLVDT, NRSP…LLDP, QCPVSVPSPDPELLRVTWAPGLKNCLAISGFDGTVQVYDA, and EPLF…VWDW.

The protein belongs to the WD repeat WDR73 family. Interacts with INTS9 and INTS11; the interaction is direct. Part of the multiprotein complex composed of BRAT1, WDR73, as well as integrator complex subunits INTS9 and INTS11. As to expression, expressed in kidney and brain. In the kidney, expressed in glomeruli, most probably in podocytes, and in tubules (at protein level). In the brain, expressed in the cerebellum, with high levels in Purkinje cells and their projecting axons, in the deep cerebellar nuclei and in pyramidal neurons of the cerebral cortex (at protein level). In the white matter, mainly present in astrocytes, but not in oligodendrocytes (at protein level). Also highly expressed in endothelial cells of cerebral capillaries (at protein level).

Its subcellular location is the cytoplasm. The protein localises to the cytoskeleton. The protein resides in the spindle. It localises to the spindle pole. It is found in the cleavage furrow. Component of a multiprotein complex required for the assembly of the RNA endonuclease module of the integrator complex. Associates with INTS9 and INTS11 in the cytoplasm, stabilizing the INTS9-INTS11 heterodimer and blocking the active site of INTS11. BRAT1 then joins the complex and plugs the active site of INTS11, leading to WDR73 release and nuclear import of INTS9 and INTS11. The chain is Integrator complex assembly factor WDR73 from Homo sapiens (Human).